The primary structure comprises 302 residues: Flavin-dependent thymidylate synthase (302 aa).

Positions 43 to 257 (GFVRVIDYMG…PFAYKAFEDY (215 aa)) constitute a ThyX domain. FAD-binding positions include threonine 89, 112–114 (RHR), and glutamate 120. Residues 109–112 (QWIR), 120–124 (EYSAR), and arginine 196 contribute to the dUMP site. Residues 112–122 (RHRTANVNEYS) carry the ThyX motif motif. Residues 212-214 (DLH) and histidine 218 contribute to the FAD site. Arginine 223 is a dUMP binding site. Catalysis depends on arginine 223, which acts as the Involved in ionization of N3 of dUMP, leading to its activation.

Belongs to the thymidylate synthase ThyX family. Homotetramer. FAD serves as cofactor.

The enzyme catalyses dUMP + (6R)-5,10-methylene-5,6,7,8-tetrahydrofolate + NADPH + H(+) = dTMP + (6S)-5,6,7,8-tetrahydrofolate + NADP(+). It functions in the pathway pyrimidine metabolism; dTTP biosynthesis. Functionally, catalyzes the reductive methylation of 2'-deoxyuridine-5'-monophosphate (dUMP) to 2'-deoxythymidine-5'-monophosphate (dTMP) while utilizing 5,10-methylenetetrahydrofolate (mTHF) as the methyl donor, and NADPH and FADH(2) as the reductant. The polypeptide is Flavin-dependent thymidylate synthase (Ruegeria pomeroyi (strain ATCC 700808 / DSM 15171 / DSS-3) (Silicibacter pomeroyi)).